Reading from the N-terminus, the 288-residue chain is MLRRSLENRDAQTRQLQDAVTNVEKHFGELCQIFAAYVRKTARLRDKADLLVNEINVYASTETPHLKQGLKNFADEFAKLQDYRQAEVERLEAKVVEPLKAYGTIVKMKRDDLKATLTARNREAKQLTQLERTRQRNPSDRHVISQAETELQRATMDATRTTRHLEETIDNFEKQKIKDIKTIFSEFITIEMLFHGKALEVYTAAYQNIQKIDEEEDLEVFRHSLYPQDYSSRLDIVRANSKSPLQRSLSAKCVSGTGQVLTCRLRKDHQTEDDDEEDEDLDVTEEEN.

The N-terminal 47 residues, 1-47 (MLRRSLENRDAQTRQLQDAVTNVEKHFGELCQIFAAYVRKTARLRDK), are a transit peptide targeting the mitochondrion. Residues 10–220 (DAQTRQLQDA…KIDEEEDLEV (211 aa)) form a BAR-like region. The stretch at 107–176 (KMKRDDLKAT…ETIDNFEKQK (70 aa)) forms a coiled coil. Positions 266-288 (RKDHQTEDDDEEDEDLDVTEEEN) are disordered. Positions 271–288 (TEDDDEEDEDLDVTEEEN) are enriched in acidic residues.

This sequence belongs to the CIBAR family. In terms of assembly, homodimer (via BAR-like domain). Heterodimer with FAM92B (via BAR-like domains). Interacts (via BAR-like domain) with CBY1; this interaction is required for targeting FAM92A to centriole and cilium basal body. Interacts (via BAR-like domain) with CBY3; both proteins form a ninefold symmetric structure at the flagellar base; are recruited to the annulus in a mutually dependent manner and regulate annulus positionning.

Its subcellular location is the cytoplasm. The protein resides in the cytoskeleton. It is found in the microtubule organizing center. It localises to the centrosome. The protein localises to the centriole. Its subcellular location is the cilium basal body. The protein resides in the cell projection. It is found in the cilium. It localises to the nucleus. The protein localises to the mitochondrion inner membrane. Its subcellular location is the flagellum. Its function is as follows. Plays a critical role in regulating mitochondrial ultrastructure and function by maintaining the integrity of mitochondrial morphology, particularly the organization of cristae. Preferentially binds to negatively charged phospholipids like cardiolipin and phosphatidylinositol 4,5-bisphosphate enhancing its interaction with mitochondrial membranes. Induces membrane curvature and tubulation, which are critical for maintaining mitochondrial ultrastructure and the organization of cristae. Plays a crucial role in ciliogenesis. May play a role in limb development through its role in ciliogenesis. Plays a key role in the correct positioning of the annulus, a septin-based ring structure in the sperm flagellum, serving both as a physical barrier and a membrane diffusion barrier that separates the midpiece (MP) from the principal piece (PP). This positioning is essential for proper sperm motility and function. Interacts with CBY3 to form a complex which localizes to the curved membrane region of the flagellar pocket. By doing so, may provide stability and rigidity to the periannular membrane to prevent membrane deformation. This function is crucial for halting annulus migration at the proximal end of the fibrous sheath-containing PP. This is CBY1-interacting BAR domain-containing protein 1 from Bos taurus (Bovine).